The following is a 262-amino-acid chain: Adenosylcobinamide-GDP ribazoletransferase (262 aa).

5 helical membrane passes run Ala-41–Leu-63, Leu-68–Leu-85, Ile-115–Phe-134, Phe-141–Trp-163, and Leu-201–Leu-221.

The protein belongs to the CobS family. In terms of assembly, associated with a large complex of proteins. Mg(2+) is required as a cofactor.

Its subcellular location is the cell inner membrane. It carries out the reaction alpha-ribazole + adenosylcob(III)inamide-GDP = adenosylcob(III)alamin + GMP + H(+). The catalysed reaction is alpha-ribazole 5'-phosphate + adenosylcob(III)inamide-GDP = adenosylcob(III)alamin 5'-phosphate + GMP + H(+). It participates in cofactor biosynthesis; adenosylcobalamin biosynthesis; adenosylcobalamin from cob(II)yrinate a,c-diamide: step 7/7. In terms of biological role, joins adenosylcobinamide-GDP and alpha-ribazole to generate adenosylcobalamin (Ado-cobalamin). Also synthesizes adenosylcobalamin 5'-phosphate from adenosylcobinamide-GDP and alpha-ribazole 5'-phosphate. This chain is Adenosylcobinamide-GDP ribazoletransferase (cobV), found in Sinorhizobium sp.